Here is a 560-residue protein sequence, read N- to C-terminus: Oxygen-dependent choline dehydrogenase (560 aa).

8 to 37 is an FAD binding site; sequence DYIIIGAGSAGNVLATRLTEDADVSVLLLE. Catalysis depends on histidine 475, which acts as the Proton acceptor.

This sequence belongs to the GMC oxidoreductase family. Requires FAD as cofactor.

The catalysed reaction is choline + A = betaine aldehyde + AH2. It carries out the reaction betaine aldehyde + NAD(+) + H2O = glycine betaine + NADH + 2 H(+). The protein operates within amine and polyamine biosynthesis; betaine biosynthesis via choline pathway; betaine aldehyde from choline (cytochrome c reductase route): step 1/1. In terms of biological role, involved in the biosynthesis of the osmoprotectant glycine betaine. Catalyzes the oxidation of choline to betaine aldehyde and betaine aldehyde to glycine betaine at the same rate. The protein is Oxygen-dependent choline dehydrogenase of Stenotrophomonas maltophilia (strain K279a).